The primary structure comprises 117 residues: MKYPYSFEVLTNGKLVMRLPQEIKLMETFLGVEVSAFGDWILEEIHSVLNGKENYVVVNGNICGLEIRKDTTTVLDNLAEDGKGDFCEIETIELVDLIHIWQDKQKEFKKGKNKELK.

As to quaternary structure, probably interacts with cognate toxin BC_0920 but not with other non-cognate toxins. The interaction inhibits the toxic activity of BC_0920.

The protein localises to the cytoplasm. Immunity component of an LXG toxin-immunity module. Neutralizes the RNase activity of cognate toxin BC_0920. Probably does not have immunity protein activity on other toxins with the LXG domain. In Bacillus cereus (strain ATCC 14579 / DSM 31 / CCUG 7414 / JCM 2152 / NBRC 15305 / NCIMB 9373 / NCTC 2599 / NRRL B-3711), this protein is Immunity protein BC_0921.